The following is a 356-amino-acid chain: Uroporphyrinogen decarboxylase (356 aa).

Substrate contacts are provided by residues 27-31 (RQAGR), Asp-77, Tyr-154, Thr-209, and His-327.

It belongs to the uroporphyrinogen decarboxylase family. In terms of assembly, homodimer.

Its subcellular location is the cytoplasm. The catalysed reaction is uroporphyrinogen III + 4 H(+) = coproporphyrinogen III + 4 CO2. Its pathway is porphyrin-containing compound metabolism; protoporphyrin-IX biosynthesis; coproporphyrinogen-III from 5-aminolevulinate: step 4/4. Catalyzes the decarboxylation of four acetate groups of uroporphyrinogen-III to yield coproporphyrinogen-III. This chain is Uroporphyrinogen decarboxylase, found in Cellvibrio japonicus (strain Ueda107) (Pseudomonas fluorescens subsp. cellulosa).